Here is a 266-residue protein sequence, read N- to C-terminus: HLA class II histocompatibility antigen, DRB1 beta chain (266 aa).

An N-terminal signal peptide occupies residues 1–29 (MVCLKLPGGSCMTALTVTLMVLSSPLALS). Positions 30-124 (GDTRPRFLWQ…VESFTVQRRV (95 aa)) are beta-1. Residues 30–227 (GDTRPRFLWQ…RARSESAQSK (198 aa)) are Extracellular-facing. An intrachain disulfide couples Cys-44 to Cys-108. N-linked (GlcNAc...) asparagine glycosylation is present at Asn-48. A peptide antigen contacts are provided by Asp-86, Trp-90, His-110, Asn-111, and Arg-122. The tract at residues 125–227 (QPKVTVYPSK…RARSESAQSK (103 aa)) is beta-2. Positions 126–214 (PKVTVYPSKT…EHPSVTSPLT (89 aa)) constitute an Ig-like C1-type domain. The cysteines at positions 146 and 202 are disulfide-linked. A helical transmembrane segment spans residues 228-248 (MLSGVGGFVLGLLFLGAGLFI). Residues 249-266 (YFRNQKGHSGLQPTGFLS) lie on the Cytoplasmic side of the membrane. Lys-254 is covalently cross-linked (Glycyl lysine isopeptide (Lys-Gly) (interchain with G-Cter in ubiquitin)).

In terms of assembly, heterotrimer that consists of an alpha chain HLA-DRA, a beta chain HLA-DRB1 and a peptide (peptide-MHCII). Newly synthesized alpha and beta chains forms a heterodimer (MHCII) that associates with the CD74/invariant chain (Ii) in the endoplasmic reticulum (ER). Ii is a trimer composed of three subunits and each subunit interacts with one MHCII dimer, blocking the peptide-binding cleft. As a result, MHCII molecules cannot bind peptides present in the ER. The complex of MHCII and CD74/Ii is transported in vesicles from ER to Golgi to lysosomes, where it encounters antigenic peptides generated via proteolysis of endocytosed antigens. MHCII dimers are dissociated from CD74/Ii by the combined action of proteolysis and HLA-DM. Lysosomal enzymes such as cathepsin, degrade CD74/Ii leaving a 24 amino acid remnant called class II-associated Ii or CLIP. Interacts (via the peptide binding cleft) with CLIP; this interaction inhibits antigen peptide binding before entry in the endosomal compartment. The displacement of CLIP and replacement by a high affinity peptide in lysosomes is performed by HLA-DM heterodimer. HLA-DM catalyzes CLIP dissociation from MHCII, stabilizes empty MHCII and mediates the selection of high affinity peptides. Interacts with HLA-DM heterodimer; this interaction is direct. Interacts with TCR (via CDR3). Interacts (via beta-2 domain) with CD4 coreceptor (via Ig-like V-type domain); this interaction is of exceptionally low affinity yet necessary for optimal recognition of antigenic peptides. As to quaternary structure, (Microbial infection) Interacts with Staphylococcus aureus enterotoxin A/entA, enterotoxin B/entB, enterotoxin C1/entC1, enterotoxin D/entD and enterotoxin H/entH. Enterotoxins bind outside the peptide-binding cleft of MHCII: enterotoxin H/entH interacts via the beta-1 domain of MHCII and in a zinc-dependent way, whereas enterotoxin B/entB interacts primarily via the alpha-1 domain. (Microbial infection) Interacts with Epstein-Barr virus gp42 protein. Ubiquitinated by MARCHF1 and MARCHF8 at Lys-254 leading to sorting into the endosome system and down-regulation of MHCII. As to expression, expressed in professional APCs: monocyte/macrophages, dendritic cells and B cells (at protein level). Expressed in thymic epithelial cells (at protein level).

Its subcellular location is the cell membrane. It is found in the endoplasmic reticulum membrane. It localises to the lysosome membrane. The protein localises to the late endosome membrane. The protein resides in the autolysosome membrane. In terms of biological role, a beta chain of antigen-presenting major histocompatibility complex class II (MHCII) molecule. In complex with the alpha chain HLA-DRA, displays antigenic peptides on professional antigen presenting cells (APCs) for recognition by alpha-beta T cell receptor (TCR) on HLA-DRB1-restricted CD4-positive T cells. This guides antigen-specific T-helper effector functions, both antibody-mediated immune response and macrophage activation, to ultimately eliminate the infectious agents and transformed cells. Typically presents extracellular peptide antigens of 10 to 30 amino acids that arise from proteolysis of endocytosed antigens in lysosomes. In the tumor microenvironment, presents antigenic peptides that are primarily generated in tumor-resident APCs likely via phagocytosis of apoptotic tumor cells or macropinocytosis of secreted tumor proteins. Presents peptides derived from intracellular proteins that are trapped in autolysosomes after macroautophagy, a mechanism especially relevant for T cell selection in the thymus and central immune tolerance. The selection of the immunodominant epitopes follows two processing modes: 'bind first, cut/trim later' for pathogen-derived antigenic peptides and 'cut first, bind later' for autoantigens/self-peptides. The anchor residue at position 1 of the peptide N-terminus, usually a large hydrophobic residue, is essential for high affinity interaction with MHCII molecules. Allele DRB1*01:01: Displays an immunodominant epitope derived from Bacillus anthracis pagA/protective antigen, PA (KLPLYISNPNYKVNVYAVT), to both naive and PA-specific memory CD4-positive T cells. Presents immunodominant HIV-1 gag peptide (FRDYVDRFYKTLRAEQASQE) on infected dendritic cells for recognition by TRAV24-TRBV2 TCR on CD4-positive T cells and controls viral load. May present to T-helper 1 cells several HRV-16 epitopes derived from capsid proteins VP1 (PRFSLPFLSIASAYYMFYDG) and VP2 (PHQFINLRSNNSATLIVPYV), contributing to viral clearance. Displays commonly recognized peptides derived from IAV external protein HA (PKYVKQNTLKLAT and SNGNFIAPEYAYKIVK) and from internal proteins M, NP and PB1, with M-derived epitope (GLIYNRMGAVTTEV) being the most immunogenic. Presents a self-peptide derived from COL4A3 (GWISLWKGFSF) to TCR (TRAV14 biased) on CD4-positive, FOXP3-positive regulatory T cells and mediates immune tolerance to self. May present peptides derived from oncofetal trophoblast glycoprotein TPBG 5T4, known to be recognized by both T-helper 1 and regulatory T cells. Displays with low affinity a self-peptide derived from MBP (VHFFKNIVTPRTP). Its function is as follows. Allele DRB1*03:01: May present to T-helper 1 cells an HRV-16 epitope derived from capsid protein VP2 (NEKQPSDDNWLNFDGTLLGN), contributing to viral clearance. Displays self-peptides derived from retinal SAG (NRERRGIALDGKIKHE) and thyroid TG (LSSVVVDPSIRHFDV). Presents viral epitopes derived from HHV-6B gH/U48 and U85 antigens to polyfunctional CD4-positive T cells with cytotoxic activity implicated in control of HHV-6B infection. Presents several immunogenic epitopes derived from C.tetani neurotoxin tetX, playing a role in immune recognition and long-term protection. Functionally, allele DRB1*04:01: Presents an immunodominant bacterial epitope derived from M.tuberculosis esxB/culture filtrate antigen CFP-10 (EISTNIRQAGVQYSR), eliciting CD4-positive T cell effector functions such as IFNG production and cytotoxic activity. May present to T-helper 1 cells an HRV-16 epitope derived from capsid protein VP2 (NEKQPSDDNWLNFDGTLLGN), contributing to viral clearance. Presents tumor epitopes derived from melanoma-associated TYR antigen (QNILLSNAPLGPQFP and DYSYLQDSDPDSFQD), triggering CD4-positive T cell effector functions such as GMCSF production. Displays preferentially citrullinated self-peptides derived from VIM (GVYATR/citSSAVR and SAVRAR/citSSVPGVR) and ACAN (VVLLVATEGR/ CitVRVNSAYQDK). Displays self-peptides derived from COL2A1. In terms of biological role, allele DRB1*04:02: Displays native or citrullinated self-peptides derived from VIM. Allele DRB1*04:04: May present to T-helper 1 cells several HRV-16 epitopes derived from capsid proteins VP1 (HIVMQYMYVPPGAPIPTTRN) and VP2 (RGDSTITSQDVANAVVGYGV), contributing to viral clearance. Displays preferentially citrullinated self-peptides derived from VIM (SAVRAR/citSSVPGVR). Its function is as follows. Allele DRB1*04:05: May present to T-helper 1 cells an immunogenic epitope derived from tumor-associated antigen WT1 (KRYFKLSHLQMHSRKH), likely providing for effective antitumor immunity in a wide range of solid and hematological malignancies. Functionally, allele DRB1*05:01: Presents an immunodominant HIV-1 gag peptide (FRDYVDRFYKTLRAEQASQE) on infected dendritic cells for recognition by TRAV24-TRBV2 TCR on CD4-positive T cells and controls viral load. In terms of biological role, allele DRB1*07:01: Upon EBV infection, presents latent antigen EBNA2 peptide (PRSPTVFYNIPPMPLPPSQL) to CD4-positive T cells, driving oligoclonal expansion and selection of a dominant virus-specific memory T cell subset with cytotoxic potential to directly eliminate virus-infected B cells. May present to T-helper 1 cells several HRV-16 epitopes derived from capsid proteins VP1 (PRFSLPFLSIASAYYMFYDG) and VP2 (VPYVNAVPMDSMVRHNNWSL), contributing to viral clearance. In the context of tumor immunesurveillance, may present to T-helper 1 cells an immunogenic epitope derived from tumor-associated antigen WT1 (MTEYKLVVVGAVGVGKSALTIQLI), likely providing for effective antitumor immunity in a wide range of solid and hematological malignancies. In metastatic epithelial tumors, presents to intratumoral CD4-positive T cells a KRAS neoantigen (MTEYKLVVVGAVGVGKSALTIQLI) carrying G12V hotspot driver mutation and may mediate tumor regression. Allele DRB1*11:01: Displays an immunodominant HIV-1 gag peptide (FRDYVDRFYKTLRAEQASQE) on infected dendritic cells for recognition by TRAV24-TRBV2 TCR on CD4-positive T cells and controls viral load. May present to T-helper 1 cells an HRV-16 epitope derived from capsid protein VP2 (SDRIIQITRGDSTITSQDVA), contributing to viral clearance. Presents several immunogenic epitopes derived from C.tetani neurotoxin tetX, playing a role in immune recognition and longterm protection. In the context of tumor immunesurveillance, may present tumor-derived neoantigens to CD4-positive T cells and trigger anti-tumor helper functions. Its function is as follows. Allele DRB1*13:01: Presents viral epitopes derived from HHV-6B antigens to polyfunctional CD4-positive T cells implicated in control of HHV-6B infection. Functionally, allele DRB1*15:01: May present to T-helper 1 cells an HRV-16 epitope derived from capsid protein VP2 (SNNSATLIVPYVNAVPMDSM), contributing to viral clearance. Displays a self-peptide derived from MBP (ENPVVHFFKNIVTPR). May present to T-helper 1 cells an immunogenic epitope derived from tumor-associated antigen WT1 (KRYFKLSHLQMHSRKH), likely providing for effective antitumor immunity in a wide range of solid and hematological malignancies. In terms of biological role, allele DRB1*15:02: Displays an immunodominant HIV-1 gag peptide (FRDYVDRFYKTLRAEQASQE) on infected dendritic cells for recognition by TRAV24-TRBV2 TCR on CD4-positive T cells and controls viral load. May present to T-helper 1 cells an immunogenic epitope derived from tumor-associated antigen WT1 (KRYFKLSHLQMHSRKH), likely providing for effective antitumor immunity in a wide range of solid and hematological malignancies. (Microbial infection) Acts as a receptor for Epstein-Barr virus on lymphocytes. The polypeptide is HLA class II histocompatibility antigen, DRB1 beta chain (Homo sapiens (Human)).